The sequence spans 125 residues: Phosphoribosyl-AMP cyclohydrolase (125 aa).

Aspartate 74 lines the Mg(2+) pocket. Cysteine 75 is a Zn(2+) binding site. Residues aspartate 76 and aspartate 78 each contribute to the Mg(2+) site. 2 residues coordinate Zn(2+): cysteine 92 and cysteine 99.

It belongs to the PRA-CH family. In terms of assembly, homodimer. Requires Mg(2+) as cofactor. Zn(2+) is required as a cofactor.

The protein resides in the cytoplasm. The catalysed reaction is 1-(5-phospho-beta-D-ribosyl)-5'-AMP + H2O = 1-(5-phospho-beta-D-ribosyl)-5-[(5-phospho-beta-D-ribosylamino)methylideneamino]imidazole-4-carboxamide. It functions in the pathway amino-acid biosynthesis; L-histidine biosynthesis; L-histidine from 5-phospho-alpha-D-ribose 1-diphosphate: step 3/9. Catalyzes the hydrolysis of the adenine ring of phosphoribosyl-AMP. This Citrifermentans bemidjiense (strain ATCC BAA-1014 / DSM 16622 / JCM 12645 / Bem) (Geobacter bemidjiensis) protein is Phosphoribosyl-AMP cyclohydrolase.